The primary structure comprises 371 residues: Peptidyl-prolyl cis-trans isomerase CPR6 (371 aa).

A PPIase cyclophilin-type domain is found at F7–V174. TPR repeat units follow at residues I219–Y252, V270–D303, and A308–D341.

This sequence belongs to the cyclophilin-type PPIase family. PPIase D subfamily. As to quaternary structure, interacts with RPD3.

The protein localises to the cytoplasm. It carries out the reaction [protein]-peptidylproline (omega=180) = [protein]-peptidylproline (omega=0). Functionally, PPIases accelerate the folding of proteins. It catalyzes the cis-trans isomerization of proline imidic peptide bonds in oligopeptides. The protein is Peptidyl-prolyl cis-trans isomerase CPR6 (CPR6) of Saccharomyces cerevisiae (strain ATCC 204508 / S288c) (Baker's yeast).